We begin with the raw amino-acid sequence, 380 residues long: Dual-specificity RNA methyltransferase RlmN (380 aa).

E94 acts as the Proton acceptor in catalysis. One can recognise a Radical SAM core domain in the interval 100-339 (DGDRATLCVS…VTVRKTRGDD (240 aa)). C107 and C344 form a disulfide bridge. C114, C118, and C121 together coordinate [4Fe-4S] cluster. S-adenosyl-L-methionine-binding positions include 168-169 (GE), S200, 222-224 (SLH), and N301. The active-site S-methylcysteine intermediate is C344.

Belongs to the radical SAM superfamily. RlmN family. It depends on [4Fe-4S] cluster as a cofactor.

The protein resides in the cytoplasm. It catalyses the reaction adenosine(2503) in 23S rRNA + 2 reduced [2Fe-2S]-[ferredoxin] + 2 S-adenosyl-L-methionine = 2-methyladenosine(2503) in 23S rRNA + 5'-deoxyadenosine + L-methionine + 2 oxidized [2Fe-2S]-[ferredoxin] + S-adenosyl-L-homocysteine. It carries out the reaction adenosine(37) in tRNA + 2 reduced [2Fe-2S]-[ferredoxin] + 2 S-adenosyl-L-methionine = 2-methyladenosine(37) in tRNA + 5'-deoxyadenosine + L-methionine + 2 oxidized [2Fe-2S]-[ferredoxin] + S-adenosyl-L-homocysteine. Specifically methylates position 2 of adenine 2503 in 23S rRNA and position 2 of adenine 37 in tRNAs. m2A2503 modification seems to play a crucial role in the proofreading step occurring at the peptidyl transferase center and thus would serve to optimize ribosomal fidelity. The chain is Dual-specificity RNA methyltransferase RlmN from Vibrio atlanticus (strain LGP32) (Vibrio splendidus (strain Mel32)).